The sequence spans 312 residues: Deoxycytidylate deaminase (312 aa).

The region spanning 162 to 291 is the CMP/dCMP-type deaminase domain; that stretch reads SWDSYFMKLA…RMDEESFKVL (130 aa). H233 provides a ligand contact to Zn(2+). The active-site Proton donor is E235. Residues C260 and C263 each coordinate Zn(2+).

The protein belongs to the cytidine and deoxycytidylate deaminase family. The cofactor is Zn(2+).

The catalysed reaction is dCMP + H2O + H(+) = dUMP + NH4(+). Allosteric enzyme whose activity is greatly influenced by the end products of its metabolic pathway, dCTP and dTTP. Catalyzes the hydrolytic deamination of dCMP to yield dUMP, the nucleotide substrate for thymidylate synthetase. The protein is Deoxycytidylate deaminase of Saccharomyces cerevisiae (strain ATCC 204508 / S288c) (Baker's yeast).